Consider the following 987-residue polypeptide: Sarcosine oxidase subunit alpha (987 aa).

Asp-198, Glu-199, Ser-206, Ala-244, and Gly-445 together coordinate NAD(+). Residues Thr-714 and Glu-806 each coordinate (6R)-5,10-methylene-5,6,7,8-tetrahydrofolate.

Belongs to the GcvT family. Heterotetramer composed of subunits alpha (SoxA), beta (SoxB), gamma (SoxG) and delta (SoxD). Requires NAD(+) as cofactor.

The protein localises to the cytoplasm. It catalyses the reaction sarcosine + (6S)-5,6,7,8-tetrahydrofolate + O2 = (6R)-5,10-methylene-5,6,7,8-tetrahydrofolate + glycine + H2O2. The enzyme catalyses sarcosine + O2 + H2O = formaldehyde + glycine + H2O2. Functionally, in the presence of tetrahydrofolate, catalyzes the oxidative demethylation of sarcosine to yield glycine, 5,10-methylenetetrahydrofolate and hydrogen peroxide. In the absence of tetrahydrofolate, catalyzes the oxidative demethylation of sarcosine to yield glycine, formaldehyde and hydrogen peroxide. In Rhizobium meliloti (strain 1021) (Ensifer meliloti), this protein is Sarcosine oxidase subunit alpha (soxA).